We begin with the raw amino-acid sequence, 737 residues long: Polyribonucleotide nucleotidyltransferase (737 aa).

Asp489 and Asp495 together coordinate Mg(2+). Residues Pro556–Ile615 enclose the KH domain. An S1 motif domain is found at Asp625 to Lys693. The tract at residues Ser691 to Glu737 is disordered. Basic and acidic residues-rich tracts occupy residues Pro700–Tyr715 and Pro725–Glu737.

It belongs to the polyribonucleotide nucleotidyltransferase family. Requires Mg(2+) as cofactor.

The protein localises to the cytoplasm. The catalysed reaction is RNA(n+1) + phosphate = RNA(n) + a ribonucleoside 5'-diphosphate. Its function is as follows. Involved in mRNA degradation. Catalyzes the phosphorolysis of single-stranded polyribonucleotides processively in the 3'- to 5'-direction. This is Polyribonucleotide nucleotidyltransferase from Streptococcus pneumoniae (strain Hungary19A-6).